Reading from the N-terminus, the 357-residue chain is GTPase Obg (357 aa).

An Obg domain is found at 1 to 159 (MKFVDEAEIQ…RTLKLELKLL (159 aa)). An OBG-type G domain is found at 160–343 (ADIGMLGFPN…IMKSAMTLFE (184 aa)). Residues 166-173 (GFPNVGKS), 191-195 (FTTLY), 213-216 (DVPG), 293-296 (NKAD), and 324-326 (SAV) contribute to the GTP site. Mg(2+) contacts are provided by Ser-173 and Thr-193.

The protein belongs to the TRAFAC class OBG-HflX-like GTPase superfamily. OBG GTPase family. In terms of assembly, monomer. The cofactor is Mg(2+).

The protein localises to the cytoplasm. In terms of biological role, an essential GTPase which binds GTP, GDP and possibly (p)ppGpp with moderate affinity, with high nucleotide exchange rates and a fairly low GTP hydrolysis rate. Plays a role in control of the cell cycle, stress response, ribosome biogenesis and in those bacteria that undergo differentiation, in morphogenesis control. The chain is GTPase Obg from Xylella fastidiosa (strain 9a5c).